Consider the following 400-residue polypeptide: Nicotinate phosphoribosyltransferase (400 aa).

Residue His220 is modified to Phosphohistidine; by autocatalysis.

The protein belongs to the NAPRTase family. Transiently phosphorylated on a His residue during the reaction cycle. Phosphorylation strongly increases the affinity for substrates and increases the rate of nicotinate D-ribonucleotide production. Dephosphorylation regenerates the low-affinity form of the enzyme, leading to product release.

The enzyme catalyses nicotinate + 5-phospho-alpha-D-ribose 1-diphosphate + ATP + H2O = nicotinate beta-D-ribonucleotide + ADP + phosphate + diphosphate. Its pathway is cofactor biosynthesis; NAD(+) biosynthesis; nicotinate D-ribonucleotide from nicotinate: step 1/1. Catalyzes the synthesis of beta-nicotinate D-ribonucleotide from nicotinate and 5-phospho-D-ribose 1-phosphate at the expense of ATP. This is Nicotinate phosphoribosyltransferase from Escherichia coli O157:H7.